Here is a 189-residue protein sequence, read N- to C-terminus: Autophagy receptor ATG45 (189 aa).

Residues 1 to 96 form a binds glycogen region; sequence MSNFLLVIPE…TNNILHFKDN (96 aa). The interval 97–189 is required for sequestration into autophagosomes; sequence EASQLMDIPL…AKKVKTYWNK (93 aa). A Phosphoserine modification is found at Ser107. An ATG8 interaction motif (AIM) motif is present at residues 127-130; that stretch reads YVNL. Ser172 is subject to Phosphoserine. The interval 176 to 187 is may facilitate interactions with the autophagosome membrane; sequence LMCIAKKVKTYW.

In terms of assembly, interacts with ATG8.

It is found in the cytoplasm. The protein localises to the cytosol. It localises to the cytoplasmic vesicle. The protein resides in the autophagosome. Autophagy receptor for glycogen that facilitates the sequestration of glycogen assemblies into autophagosomes as part of bulk autophagy; the autophagy of glycogen (glycophagy) is stimulated during prolonged nitrogen starvation and during sporulation. The polypeptide is Autophagy receptor ATG45 (Saccharomyces cerevisiae (strain ATCC 204508 / S288c) (Baker's yeast)).